The following is a 299-amino-acid chain: Putative peptidyl-prolyl cis-trans isomerase HP_0175 (299 aa).

Residues M1–A21 form the signal peptide. In terms of domain architecture, PpiC spans K154 to S253.

The enzyme catalyses [protein]-peptidylproline (omega=180) = [protein]-peptidylproline (omega=0). This chain is Putative peptidyl-prolyl cis-trans isomerase HP_0175, found in Helicobacter pylori (strain ATCC 700392 / 26695) (Campylobacter pylori).